A 640-amino-acid chain; its full sequence is Translation factor GUF1, mitochondrial (640 aa).

The transit peptide at M1–T26 directs the protein to the mitochondrion. Positions E39–T223 constitute a tr-type G domain. Residues A48–S55, D115–H119, and N169–D172 each bind GTP.

This sequence belongs to the TRAFAC class translation factor GTPase superfamily. Classic translation factor GTPase family. LepA subfamily.

The protein localises to the mitochondrion inner membrane. It catalyses the reaction GTP + H2O = GDP + phosphate + H(+). In terms of biological role, promotes mitochondrial protein synthesis. May act as a fidelity factor of the translation reaction, by catalyzing a one-codon backward translocation of tRNAs on improperly translocated ribosomes. Binds to mitochondrial ribosomes in a GTP-dependent manner. The sequence is that of Translation factor GUF1, mitochondrial from Lachancea thermotolerans (strain ATCC 56472 / CBS 6340 / NRRL Y-8284) (Yeast).